The primary structure comprises 262 residues: Global transcriptional regulator CodY (262 aa).

The GAF domain stretch occupies residues 1 to 159 (MAHLLEKTRK…ASTVVGIQLL (159 aa)). The H-T-H motif DNA-binding region spans 207 to 226 (ASVIADRIGITRSVIVNALR).

This sequence belongs to the CodY family.

The protein resides in the cytoplasm. Its function is as follows. DNA-binding global transcriptional regulator which is involved in the adaptive response to starvation and acts by directly or indirectly controlling the expression of numerous genes in response to nutrient availability. During rapid exponential growth, CodY is highly active and represses genes whose products allow adaptation to nutrient depletion. This chain is Global transcriptional regulator CodY, found in Streptococcus pneumoniae (strain ATCC BAA-255 / R6).